Consider the following 292-residue polypeptide: 5,10-methylenetetrahydrofolate reductase (292 aa).

Glutamate 28 acts as the Proton donor/acceptor in catalysis. Residue threonine 59 coordinates NADH. Residues tyrosine 60, alanine 62, histidine 88, arginine 118, glycine 119, aspartate 120, alanine 132, tyrosine 152, histidine 156, aspartate 165, asparagine 168, lysine 171, and lysine 172 each coordinate FAD. (6S)-5-methyl-5,6,7,8-tetrahydrofolate is bound at residue aspartate 120. NADH is bound at residue glutamine 183. A (6S)-5-methyl-5,6,7,8-tetrahydrofolate-binding site is contributed by glutamine 183.

The protein belongs to the methylenetetrahydrofolate reductase family. FAD is required as a cofactor.

The catalysed reaction is (6S)-5-methyl-5,6,7,8-tetrahydrofolate + NAD(+) = (6R)-5,10-methylene-5,6,7,8-tetrahydrofolate + NADH + H(+). Its pathway is one-carbon metabolism; tetrahydrofolate interconversion. It participates in amino-acid biosynthesis; L-methionine biosynthesis via de novo pathway. Functionally, catalyzes the NADH-dependent reduction of 5,10-methylenetetrahydrofolate to 5-methyltetrahydrofolate. Is required to provide the methyl group necessary for methionine synthetase to convert homocysteine to methionine; the methyl group is given by 5-methyltetrahydrofolate. The protein is 5,10-methylenetetrahydrofolate reductase (metF) of Buchnera aphidicola subsp. Acyrthosiphon pisum (strain APS) (Acyrthosiphon pisum symbiotic bacterium).